A 363-amino-acid polypeptide reads, in one-letter code: Methyltransferase pynC (363 aa).

Residues G199 to G200, D225, S254 to F255, R270, and R271 each bind S-adenosyl-L-methionine.

It belongs to the class I-like SAM-binding methyltransferase superfamily. Cation-independent O-methyltransferase family.

The protein operates within secondary metabolite biosynthesis. Its function is as follows. Methyltransferase; part of the gene cluster that mediates the biosynthesis of pyranonigrins, a family of antioxidative compounds. The first step of pyranonigrins biosynthesis is performed by the hybrid PKS-NRPS synthetase that condenses 6 malonyl-CoA units to an acetyl starter unit, to form a 1,3,5-trioxotetradecane-6,8-dienyl-ACP. The enoyl reductase (ER) domain of pynA is likely to be functional during the first two rounds of polyketide chain extension, to generate the saturated C-C bonds of the alkyl side chain. PynA subsequently forms the amide bond between the acyl chain and L-serine. Although pynA has a terminal reductase domain, it appears to require the thioesterase pynI for the release of the straight-chain intermediate from pynA via the formation of a tetramic acid pyranonigrin J. The methyltransferase pynC then coverts pyranonigrin J to pyranonigrin I via N-methylation. The FAD-dependent monooxygenase pynG catalyzes an epoxidation-mediated cyclization to form the dihydro-gamma-pyrone moiety, followed by pynD-catalyzed oxidation of the alcohol to the ketone and enolization to yield the characteristic tetramic acid-fused gamma-pyrone core of pyranonigrin H. Pyranonigrin H is substrate of pynH for dehydration-mediated exo-methylene formation from the serine side chain to produce pyranonigrin E, before the oxidase pynE reduces the exo-methylene of pyranonigrin E into a pendant methyl to form pyranonigrin G. The FAD-linked oxidoreductase pynB performs the reverse reaction and converts pyranonigrin G back to pyranonigrin E. The protein is Methyltransferase pynC of Aspergillus niger (strain ATCC MYA-4892 / CBS 513.88 / FGSC A1513).